The following is a 58-amino-acid chain: Small ribosomal subunit protein bS21 (58 aa).

Positions 35 to 58 are disordered; sequence REHYEKPSVKRKKKSEAARKRKFK. Positions 43 to 58 are enriched in basic residues; it reads VKRKKKSEAARKRKFK.

It belongs to the bacterial ribosomal protein bS21 family.

In Ruminiclostridium cellulolyticum (strain ATCC 35319 / DSM 5812 / JCM 6584 / H10) (Clostridium cellulolyticum), this protein is Small ribosomal subunit protein bS21.